A 534-amino-acid polypeptide reads, in one-letter code: ATP synthase subunit beta 2 (534 aa).

Residues 1–10 are compositionally biased toward polar residues; it reads MADPQATNGT. The disordered stretch occupies residues 1–30; that stretch reads MADPQATNGTGAACAERDASDVGDVSDVGD. 185–192 contacts ATP; that stretch reads GGAGVGKT. Positions 494-505 are enriched in basic and acidic residues; it reads AAAREADARREA. Residues 494–534 form a disordered region; that stretch reads AAAREADARREAAAAASGAGPGTTSDPASGSAEPQGARHGR.

The protein belongs to the ATPase alpha/beta chains family. F-type ATPases have 2 components, CF(1) - the catalytic core - and CF(0) - the membrane proton channel. CF(1) has five subunits: alpha(3), beta(3), gamma(1), delta(1), epsilon(1). CF(0) has three main subunits: a(1), b(2) and c(9-12). The alpha and beta chains form an alternating ring which encloses part of the gamma chain. CF(1) is attached to CF(0) by a central stalk formed by the gamma and epsilon chains, while a peripheral stalk is formed by the delta and b chains.

The protein localises to the cell inner membrane. The enzyme catalyses ATP + H2O + 4 H(+)(in) = ADP + phosphate + 5 H(+)(out). Produces ATP from ADP in the presence of a proton gradient across the membrane. The catalytic sites are hosted primarily by the beta subunits. The protein is ATP synthase subunit beta 2 of Burkholderia pseudomallei (strain 668).